A 331-amino-acid polypeptide reads, in one-letter code: Protein RecA (331 aa).

67 to 74 contributes to the ATP binding site; the sequence is GPESSGKT.

Belongs to the RecA family.

The protein localises to the cytoplasm. Functionally, can catalyze the hydrolysis of ATP in the presence of single-stranded DNA, the ATP-dependent uptake of single-stranded DNA by duplex DNA, and the ATP-dependent hybridization of homologous single-stranded DNAs. It interacts with LexA causing its activation and leading to its autocatalytic cleavage. The chain is Protein RecA from Wigglesworthia glossinidia brevipalpis.